The following is a 256-amino-acid chain: Diaminopimelate epimerase (256 aa).

Substrate-binding residues include Asn-11 and Asn-63. Cys-72 acts as the Proton donor in catalysis. Residues 73–74, Asn-169, and 187–188 each bind substrate; these read GN and ER. Cys-197 serves as the catalytic Proton acceptor. 198–199 is a substrate binding site; that stretch reads GT.

This sequence belongs to the diaminopimelate epimerase family. Homodimer.

The protein localises to the cytoplasm. The enzyme catalyses (2S,6S)-2,6-diaminopimelate = meso-2,6-diaminopimelate. The protein operates within amino-acid biosynthesis; L-lysine biosynthesis via DAP pathway; DL-2,6-diaminopimelate from LL-2,6-diaminopimelate: step 1/1. Catalyzes the stereoinversion of LL-2,6-diaminopimelate (L,L-DAP) to meso-diaminopimelate (meso-DAP), a precursor of L-lysine and an essential component of the bacterial peptidoglycan. This Flavobacterium psychrophilum (strain ATCC 49511 / DSM 21280 / CIP 103535 / JIP02/86) protein is Diaminopimelate epimerase.